The following is a 231-amino-acid chain: Protein FMP52, mitochondrial (231 aa).

The N-terminal 44 residues, 1–44, are a transit peptide targeting the mitochondrion; the sequence is MNGLVLGATGLCGGGFLRHAQEAPQFSKVYAILRRELPFPATDK.

This sequence belongs to the FMP52 family.

It is found in the mitochondrion outer membrane. The polypeptide is Protein FMP52, mitochondrial (FMP52) (Saccharomyces cerevisiae (strain ATCC 204508 / S288c) (Baker's yeast)).